The chain runs to 211 residues: MARRSQGTKLHLAVLCLVVSCHAIGLSDLMERASQRSDKLHSLSTSLTKDLDSHFPPMGRVMMPRPSMCHTSSLQTPKDKEQALKVSENELISLARYLLLAWNDPLLLLSSEAPTLPHTPSNGDISSKIRELQDYSKSLGDGLDIMVNKMGPSSQYISSIPFKGGDLGNDKTSRLINFHFLMSCFRRDSHKIDSFLKVLRCRATNMRPETC.

The signal sequence occupies residues 1 to 23 (MARRSQGTKLHLAVLCLVVSCHA). 2 cysteine pairs are disulfide-bonded: cysteine 69-cysteine 184 and cysteine 201-cysteine 211.

It belongs to the somatotropin/prolactin family.

The protein resides in the secreted. This chain is Prolactin-1 (prl1), found in Oncorhynchus keta (Chum salmon).